The chain runs to 206 residues: Small ribosomal subunit protein uS4 (206 aa).

The 58-residue stretch at 98–155 (TRLDNVVYRLGWALSRDQARQLVSHGKIAVNGKRVNIPSYNLKPGDVVELLDKDLIPV) folds into the S4 RNA-binding domain.

The protein belongs to the universal ribosomal protein uS4 family. Part of the 30S ribosomal subunit. Contacts protein S5. The interaction surface between S4 and S5 is involved in control of translational fidelity.

In terms of biological role, one of the primary rRNA binding proteins, it binds directly to 16S rRNA where it nucleates assembly of the body of the 30S subunit. With S5 and S12 plays an important role in translational accuracy. The sequence is that of Small ribosomal subunit protein uS4 from Dictyoglomus thermophilum (strain ATCC 35947 / DSM 3960 / H-6-12).